The following is a 442-amino-acid chain: Trigger factor (442 aa).

The region spanning 165–250 (DDTAQIDFEG…LHKILQKELP (86 aa)) is the PPIase FKBP-type domain.

This sequence belongs to the FKBP-type PPIase family. Tig subfamily.

It localises to the cytoplasm. The catalysed reaction is [protein]-peptidylproline (omega=180) = [protein]-peptidylproline (omega=0). In terms of biological role, involved in protein export. Acts as a chaperone by maintaining the newly synthesized protein in an open conformation. Functions as a peptidyl-prolyl cis-trans isomerase. The polypeptide is Trigger factor (Helicobacter hepaticus (strain ATCC 51449 / 3B1)).